A 371-amino-acid polypeptide reads, in one-letter code: Glutamate 5-kinase (371 aa).

Lys-12 is a binding site for ATP. Residues Ser-52, Asp-136, and Asn-148 each coordinate substrate. Residues 168-169 (SD) and 210-216 (TGGMRTK) each bind ATP. Positions 275-354 (QGEILVDEGA…EDIAEKFGYS (80 aa)) constitute a PUA domain.

Belongs to the glutamate 5-kinase family.

It is found in the cytoplasm. The enzyme catalyses L-glutamate + ATP = L-glutamyl 5-phosphate + ADP. The protein operates within amino-acid biosynthesis; L-proline biosynthesis; L-glutamate 5-semialdehyde from L-glutamate: step 1/2. Its function is as follows. Catalyzes the transfer of a phosphate group to glutamate to form L-glutamate 5-phosphate. The sequence is that of Glutamate 5-kinase from Idiomarina loihiensis (strain ATCC BAA-735 / DSM 15497 / L2-TR).